Here is a 414-residue protein sequence, read N- to C-terminus: Esterase FrsA (414 aa).

This sequence belongs to the FrsA family.

The catalysed reaction is a carboxylic ester + H2O = an alcohol + a carboxylate + H(+). Catalyzes the hydrolysis of esters. The chain is Esterase FrsA from Shigella dysenteriae serotype 1 (strain Sd197).